The chain runs to 358 residues: tRNA-specific 2-thiouridylase MnmA (358 aa).

Residues 6–13 (LVSGGVDS) and I32 each bind ATP. The interaction with target base in tRNA stretch occupies residues 93–95 (NPD). C98 functions as the Nucleophile in the catalytic mechanism. C98 and C193 are disulfide-bonded. G121 serves as a coordination point for ATP. An interaction with tRNA region spans residues 143-145 (KDQ). C193 acts as the Cysteine persulfide intermediate in catalysis.

This sequence belongs to the MnmA/TRMU family.

It is found in the cytoplasm. The catalysed reaction is S-sulfanyl-L-cysteinyl-[protein] + uridine(34) in tRNA + AH2 + ATP = 2-thiouridine(34) in tRNA + L-cysteinyl-[protein] + A + AMP + diphosphate + H(+). Its function is as follows. Catalyzes the 2-thiolation of uridine at the wobble position (U34) of tRNA, leading to the formation of s(2)U34. The chain is tRNA-specific 2-thiouridylase MnmA from Parabacteroides distasonis (strain ATCC 8503 / DSM 20701 / CIP 104284 / JCM 5825 / NCTC 11152).